The primary structure comprises 161 residues: C-type natriuretic peptide (161 aa).

A signal peptide spans 1–22; the sequence is MFASRLAALGLLLLALVLDGKP. Positions 19 to 135 are disordered; the sequence is DGKPAPPPQP…GGGGSRRLKG (117 aa). The propeptide occupies 23–139; the sequence is APPPQPLRKA…SRRLKGLPKK (117 aa). Low complexity-rich tracts occupy residues 29-60 and 76-93; these read LRKA…SSGP and AAPT…AASR. Positions 94–104 are enriched in basic and acidic residues; sequence LLRDLRPDGKQ. Positions 120–130 are enriched in gly residues; that stretch reads GGGGGGGGGGS. Cysteines 145 and 161 form a disulfide.

The protein belongs to the natriuretic peptide family. In terms of tissue distribution, expressed by the venom gland.

The protein localises to the secreted. Its function is as follows. Snake venom natriuretic peptide that has a vasorelaxant activity in rat aortic strips and a diuretic potency in anesthetized rats. May act by activating natriuretic receptors (NPR1 and/or NPR2). The sequence is that of C-type natriuretic peptide from Rhabdophis tigrinus tigrinus (Tiger keelback snake).